The following is a 329-amino-acid chain: MYG1 protein (329 aa).

It belongs to the MYG1 family.

This chain is MYG1 protein, found in Dictyostelium discoideum (Social amoeba).